Reading from the N-terminus, the 460-residue chain is tRNA(Ile)-lysidine synthase (460 aa).

An ATP-binding site is contributed by 30 to 35; the sequence is SGGLDS.

Belongs to the tRNA(Ile)-lysidine synthase family.

It is found in the cytoplasm. The enzyme catalyses cytidine(34) in tRNA(Ile2) + L-lysine + ATP = lysidine(34) in tRNA(Ile2) + AMP + diphosphate + H(+). Its function is as follows. Ligates lysine onto the cytidine present at position 34 of the AUA codon-specific tRNA(Ile) that contains the anticodon CAU, in an ATP-dependent manner. Cytidine is converted to lysidine, thus changing the amino acid specificity of the tRNA from methionine to isoleucine. This Yersinia pestis protein is tRNA(Ile)-lysidine synthase.